We begin with the raw amino-acid sequence, 160 residues long: Troponin C, skeletal muscle (160 aa).

Thr-2 is subject to N-acetylthreonine. 4 consecutive EF-hand domains span residues 15–50, 51–86, 91–126, and 127–160; these read EMIA…LGQT, PTKE…QMKE, KSEE…SGEH, and VTDE…EGVQ. Ca(2+) contacts are provided by Asp-28, Asp-30, Asp-34, Glu-39, Asp-64, Asp-66, Ser-68, Thr-70, Glu-75, Asp-104, Asn-106, Asp-108, Tyr-110, Glu-115, Asp-140, Asn-142, Asp-144, Arg-146, and Glu-151.

The protein belongs to the troponin C family.

Functionally, troponin is the central regulatory protein of striated muscle contraction. Tn consists of three components: Tn-I which is the inhibitor of actomyosin ATPase, Tn-T which contains the binding site for tropomyosin and Tn-C. The binding of calcium to Tn-C abolishes the inhibitory action of Tn on actin filaments. The chain is Troponin C, skeletal muscle (TNNC2) from Homo sapiens (Human).